The following is a 355-amino-acid chain: Ataxin-3-like protein (355 aa).

In terms of domain architecture, Josephin spans 1–180 (MDFIFHEKQE…DCEADQLLQI (180 aa)). Cys14 serves as the catalytic Nucleophile. Catalysis depends on His119, which acts as the Proton acceptor. Residue Asn134 is part of the active site. Disordered regions lie at residues 209-230 (LEKV…EDFQ) and 253-331 (LSMQ…DISE). Over residues 215 to 228 (ESDESGTSDQDEED) the composition is skewed to acidic residues. 2 UIM domains span residues 224 to 243 (QDEE…TNRE) and 244 to 258 (DEHL…MQGS). A compositionally biased stretch (polar residues) spans 253-276 (LSMQGSSGNTSQDLPKTSCVTPAS). Residues 278–293 (QPKKIKEDYFEKHQQE) show a composition bias toward basic and acidic residues.

In terms of tissue distribution, widely expressed.

It localises to the nucleus. The catalysed reaction is Thiol-dependent hydrolysis of ester, thioester, amide, peptide and isopeptide bonds formed by the C-terminal Gly of ubiquitin (a 76-residue protein attached to proteins as an intracellular targeting signal).. Deubiquitinating enzyme that cleaves both 'Lys-48'-linked and 'Lys-63'-linked poly-ubiquitin chains (in vitro). Acts as a deubiquitinating enzyme for the transcription factor KLF5, playing a role in the regulation of KLF5 stability. The chain is Ataxin-3-like protein from Homo sapiens (Human).